Reading from the N-terminus, the 405-residue chain is S-adenosylmethionine synthase (405 aa).

Residue 141-146 participates in ATP binding; it reads GQGSVD.

This sequence belongs to the AdoMet synthase 2 family. It depends on Mg(2+) as a cofactor.

It catalyses the reaction L-methionine + ATP + H2O = S-adenosyl-L-methionine + phosphate + diphosphate. The protein operates within amino-acid biosynthesis; S-adenosyl-L-methionine biosynthesis; S-adenosyl-L-methionine from L-methionine: step 1/1. Catalyzes the formation of S-adenosylmethionine from methionine and ATP. The polypeptide is S-adenosylmethionine synthase (Methanococcus maripaludis (Methanococcus deltae)).